Here is a 458-residue protein sequence, read N- to C-terminus: Cysteine--tRNA ligase (458 aa).

C29 serves as a coordination point for Zn(2+). The 'HIGH' region signature appears at 31-41 (PTVYDFLHIGN). Zn(2+)-binding residues include C211, H236, and E240. A 'KMSKS' region motif is present at residues 269-273 (KMSKS). ATP is bound at residue K272.

The protein belongs to the class-I aminoacyl-tRNA synthetase family. As to quaternary structure, monomer. Zn(2+) is required as a cofactor.

The protein resides in the cytoplasm. The catalysed reaction is tRNA(Cys) + L-cysteine + ATP = L-cysteinyl-tRNA(Cys) + AMP + diphosphate. This Beijerinckia indica subsp. indica (strain ATCC 9039 / DSM 1715 / NCIMB 8712) protein is Cysteine--tRNA ligase.